The following is an 89-amino-acid chain: Luqin-like RYamide peptides lury-1 (89 aa).

An N-terminal signal peptide occupies residues 1-19 (MLTRVPVLILAVIVMLALC). The propeptide occupies 20-26 (QEPEKPE). Tyr-35 and Tyr-43 each carry tyrosine amide. Residues 47 to 89 (SGNLMESSQNSLTEESSDVVCQLIDGKYICLPVDAVRFRPFFL) constitute a propeptide that is removed on maturation.

As to expression, expressed in the M1 and M2 pharyngeal neurons from where the LURY-1-1 and LURY-1-2 peptides are secreted.

The protein resides in the secreted. Its function is as follows. Acts as a ligand for the npr-22 receptor and controls food-related processes including feeding, lifespan, egg-laying and roaming behavior. Secreted in the presence of food, leading to reduced feeding and roaming behavior and increased egg laying and lifespan. Activity may be latent under normal conditions but induced under conditions that cause hyperactivation of the pharynx such as abrupt refeeding after starvation. This is Luqin-like RYamide peptides lury-1 from Caenorhabditis elegans.